The chain runs to 1074 residues: Chitin synthase 2 (1074 aa).

Disordered stretches follow at residues 1-32, 56-179, and 209-255; these read MSHY…AHSG, QAAP…PSQH, and RSDS…PYNN. Residues 19-29 show a composition bias toward polar residues; sequence DQQQPYYTDQA. The span at 68–80 shows a compositional bias: low complexity; sequence RIRSNSSGSRSVS. N-linked (GlcNAc...) asparagine glycans are attached at residues asparagine 72 and asparagine 97. The span at 85 to 119 shows a compositional bias: polar residues; it reads AYTNQGIPPVPSNLSAARQRSDPSQALPPSSSSYA. Positions 129-143 are enriched in low complexity; that stretch reads SSHRNAPNAPNSNHP. Asparagine 149 carries an N-linked (GlcNAc...) asparagine glycan. N-linked (GlcNAc...) asparagine glycosylation is present at asparagine 289. Transmembrane regions (helical) follow at residues 608–628, 742–762, 779–799, 817–837, 867–887, 891–911, 1001–1021, and 1048–1068; these read VFGF…KALL, LVLL…FYFL, GAAI…VVLV, IIIF…TIYL, IVIS…LHLE, MLTS…ILSM, LVLI…STWW, and IFWS…TFLL.

It belongs to the chitin synthase family. Class II subfamily.

It localises to the cell membrane. The protein resides in the cytoplasmic vesicle membrane. The catalysed reaction is [(1-&gt;4)-N-acetyl-beta-D-glucosaminyl](n) + UDP-N-acetyl-alpha-D-glucosamine = [(1-&gt;4)-N-acetyl-beta-D-glucosaminyl](n+1) + UDP + H(+). Functionally, polymerizes chitin, a structural polymer of the cell wall and septum, by transferring the sugar moiety of UDP-GlcNAc to the non-reducing end of the growing chitin polymer. The sequence is that of Chitin synthase 2 (CHS2) from Mycosarcoma maydis (Corn smut fungus).